A 353-amino-acid polypeptide reads, in one-letter code: Small ribosomal subunit protein uS2 (353 aa).

The segment at 256–353 (DTDEQSSAAN…TPAESTDEQA (98 aa)) is disordered. Composition is skewed to low complexity over residues 263-311 (AANT…AEAP) and 321-339 (ESATPAEAEVEAESATPAE). A compositionally biased stretch (acidic residues) spans 340-353 (AEAETPAESTDEQA).

The protein belongs to the universal ribosomal protein uS2 family.

The polypeptide is Small ribosomal subunit protein uS2 (Beutenbergia cavernae (strain ATCC BAA-8 / DSM 12333 / CCUG 43141 / JCM 11478 / NBRC 16432 / NCIMB 13614 / HKI 0122)).